A 302-amino-acid chain; its full sequence is L-glutamate/L-aspartate-binding protein (302 aa).

A signal peptide spans 1-23; that stretch reads MRIAPSLLSTAIVAALLSAPVVA.

Belongs to the bacterial solute-binding protein 3 family.

The protein localises to the periplasm. Binds L-glutamate and L-aspartate. The sequence is that of L-glutamate/L-aspartate-binding protein from Pseudomonas aeruginosa (strain ATCC 15692 / DSM 22644 / CIP 104116 / JCM 14847 / LMG 12228 / 1C / PRS 101 / PAO1).